Reading from the N-terminus, the 334-residue chain is Ketol-acid reductoisomerase (NADP(+)) (334 aa).

Positions 2 to 182 constitute a KARI N-terminal Rossmann domain; sequence PKMYYEKDTD…GGARAGVLET (181 aa). NADP(+) is bound by residues 25 to 28, serine 51, serine 53, and 83 to 86; these read YGSQ and DEKQ. The active site involves histidine 108. An NADP(+)-binding site is contributed by glycine 134. Residues 183–328 enclose the KARI C-terminal knotted domain; it reads TFKDETETDL…KELRGMMSWI (146 aa). Residues aspartate 191, glutamate 195, glutamate 227, and glutamate 231 each contribute to the Mg(2+) site. Serine 252 is a binding site for substrate.

It belongs to the ketol-acid reductoisomerase family. Mg(2+) is required as a cofactor.

The catalysed reaction is (2R)-2,3-dihydroxy-3-methylbutanoate + NADP(+) = (2S)-2-acetolactate + NADPH + H(+). It carries out the reaction (2R,3R)-2,3-dihydroxy-3-methylpentanoate + NADP(+) = (S)-2-ethyl-2-hydroxy-3-oxobutanoate + NADPH + H(+). The protein operates within amino-acid biosynthesis; L-isoleucine biosynthesis; L-isoleucine from 2-oxobutanoate: step 2/4. It functions in the pathway amino-acid biosynthesis; L-valine biosynthesis; L-valine from pyruvate: step 2/4. In terms of biological role, involved in the biosynthesis of branched-chain amino acids (BCAA). Catalyzes an alkyl-migration followed by a ketol-acid reduction of (S)-2-acetolactate (S2AL) to yield (R)-2,3-dihydroxy-isovalerate. In the isomerase reaction, S2AL is rearranged via a Mg-dependent methyl migration to produce 3-hydroxy-3-methyl-2-ketobutyrate (HMKB). In the reductase reaction, this 2-ketoacid undergoes a metal-dependent reduction by NADPH to yield (R)-2,3-dihydroxy-isovalerate. The protein is Ketol-acid reductoisomerase (NADP(+)) of Clostridium beijerinckii (strain ATCC 51743 / NCIMB 8052) (Clostridium acetobutylicum).